We begin with the raw amino-acid sequence, 452 residues long: Disintegrin and metalloproteinase domain-containing protein 11 (452 aa).

In terms of domain architecture, Peptidase M12B spans 1–120 (RRHHSPLLVS…GGGSCLFNKP (120 aa)). Topologically, residues 1-417 (RRHHSPLLVS…EKYKGPSGTN (417 aa)) are extracellular. 3 disulfide bridges follow: C31–C115, C74–C99, and C76–C83. A Disintegrin domain is found at 126-214 (PPSCGNGFIE…ACPANLHKQD (89 aa)). The N-linked (GlcNAc...) asparagine glycan is linked to N149. A disulfide bond links C186 and C206. N288 and N356 each carry an N-linked (GlcNAc...) asparagine glycan. Disulfide bonds link C360–C375, C369–C381, and C383–C392. The region spanning 360 to 416 (CPGSWNGVICSDHGVCSNEGKCICHPEWTGKDCSVYDPLPVPKPTGVVEKYKGPSGT) is the EGF-like domain. A helical membrane pass occupies residues 418–438 (IIIGSIAGAVLIAAIVLGGTG). At 439-452 (WGFKNIRRGRSGGG) the chain is on the cytoplasmic side.

Post-translationally, the precursor is cleaved by a furin endopeptidase. Detected in testis and barely expressed in heart and muscle. Not detectable in liver.

Its subcellular location is the presynaptic cell membrane. The protein localises to the perikaryon. It is found in the cell projection. It localises to the axon. In terms of biological role, probable ligand for integrin in the brain. This is a non-catalytic metalloprotease-like protein. The sequence is that of Disintegrin and metalloproteinase domain-containing protein 11 (adam11) from Xenopus laevis (African clawed frog).